A 507-amino-acid chain; its full sequence is ATP synthase subunit alpha, plastid (507 aa).

Residue 170-177 (GDRQTGKT) coordinates ATP.

Belongs to the ATPase alpha/beta chains family. In terms of assembly, F-type ATPases have 2 components, CF(1) - the catalytic core - and CF(0) - the membrane proton channel. CF(1) has five subunits: alpha(3), beta(3), gamma(1), delta(1), epsilon(1). CF(0) has four main subunits: a, b, b' and c.

It localises to the plastid membrane. It carries out the reaction ATP + H2O + 4 H(+)(in) = ADP + phosphate + 5 H(+)(out). Functionally, produces ATP from ADP in the presence of a proton gradient across the membrane. The alpha chain is a regulatory subunit. The chain is ATP synthase subunit alpha, plastid from Aneura mirabilis (Parasitic liverwort).